A 161-amino-acid polypeptide reads, in one-letter code: Allophycocyanin beta chain (161 aa).

Residue asparagine 71 is modified to N4-methylasparagine. Cysteine 81 contacts (2R,3E)-phycocyanobilin.

Belongs to the phycobiliprotein family. In terms of assembly, heterodimer of an alpha and a beta chain. In terms of processing, contains one covalently linked phycocyanobilin chromophore.

It is found in the cellular thylakoid membrane. In terms of biological role, light-harvesting photosynthetic bile pigment-protein from the phycobiliprotein complex. Allophycocyanin has a maximum absorption at approximately 650 nanometers. The chain is Allophycocyanin beta chain (apcB) from Synechocystis sp. (strain ATCC 27184 / PCC 6803 / Kazusa).